The sequence spans 267 residues: Alpha-tubulin N-acetyltransferase (267 aa).

Residues 1-197 (MDFRAGLENV…NNFVVYSEFF (197 aa)) enclose the N-acetyltransferase domain. Acetyl-CoA is bound by residues 131 to 144 (FYIHESHQRKGYGK) and 167 to 176 (SMKMIQFLHK).

This sequence belongs to the acetyltransferase ATAT1 family.

The enzyme catalyses L-lysyl-[alpha-tubulin] + acetyl-CoA = N(6)-acetyl-L-lysyl-[alpha-tubulin] + CoA + H(+). Its function is as follows. Specifically acetylates 'Lys-40' in alpha-tubulin on the lumenal side of microtubules. Promotes microtubule destabilization and accelerates microtubule dynamics; this activity may be independent of acetylation activity. Acetylates alpha-tubulin with a slow enzymatic rate, due to a catalytic site that is not optimized for acetyl transfer. Enters the microtubule through each end and diffuses quickly throughout the lumen of microtubules. Acetylates only long/old microtubules because of its slow acetylation rate since it does not have time to act on dynamically unstable microtubules before the enzyme is released. This Schistosoma japonicum (Blood fluke) protein is Alpha-tubulin N-acetyltransferase.